The primary structure comprises 132 residues: Small ribosomal subunit protein eS6 (132 aa).

This sequence belongs to the eukaryotic ribosomal protein eS6 family.

The chain is Small ribosomal subunit protein eS6 from Methanosphaerula palustris (strain ATCC BAA-1556 / DSM 19958 / E1-9c).